Here is a 381-residue protein sequence, read N- to C-terminus: Ribosome assembly 1 protein (381 aa).

At Met-1 the chain carries N-acetylmethionine. Disordered stretches follow at residues 1–38, 164–216, and 350–381; these read MNYN…IKRQ, KDTF…DRDE, and FGSS…TRNK. At Ser-172 the chain carries Phosphoserine. Basic residues predominate over residues 359–371; it reads NHYKPNYKNRKPN.

It is found in the nucleus. Involved in a late nucleoplasmic step of 60S ribosomal subunit assembly. This chain is Ribosome assembly 1 protein (RSA1), found in Saccharomyces cerevisiae (strain ATCC 204508 / S288c) (Baker's yeast).